The chain runs to 370 residues: 3-dehydroquinate synthase (370 aa).

Residues 112–116, 136–137, lysine 149, lysine 158, and 176–179 contribute to the NAD(+) site; these read GVVGD, TS, and TLRT. Residues glutamate 191, histidine 254, and histidine 276 each contribute to the Zn(2+) site.

Belongs to the sugar phosphate cyclases superfamily. Dehydroquinate synthase family. NAD(+) is required as a cofactor. It depends on Co(2+) as a cofactor. Zn(2+) serves as cofactor.

The protein resides in the cytoplasm. It carries out the reaction 7-phospho-2-dehydro-3-deoxy-D-arabino-heptonate = 3-dehydroquinate + phosphate. Its pathway is metabolic intermediate biosynthesis; chorismate biosynthesis; chorismate from D-erythrose 4-phosphate and phosphoenolpyruvate: step 2/7. Its function is as follows. Catalyzes the conversion of 3-deoxy-D-arabino-heptulosonate 7-phosphate (DAHP) to dehydroquinate (DHQ). This is 3-dehydroquinate synthase from Xanthomonas axonopodis pv. citri (strain 306).